The following is a 155-amino-acid chain: Large-conductance mechanosensitive channel (155 aa).

Helical transmembrane passes span 16-36 (VVDM…VNNL), 40-60 (VILP…LYII), and 88-108 (GVFL…FLLV).

It belongs to the MscL family. Homopentamer.

It localises to the cell inner membrane. Functionally, channel that opens in response to stretch forces in the membrane lipid bilayer. May participate in the regulation of osmotic pressure changes within the cell. This is Large-conductance mechanosensitive channel from Chlorobium chlorochromatii (strain CaD3).